A 107-amino-acid chain; its full sequence is Vasopressin-neurophysin 2 (107 aa).

Cysteine 1 and cysteine 6 form a disulfide bridge. Glycine amide is present on glycine 9. Intrachain disulfides connect cysteine 22/cysteine 66, cysteine 25/cysteine 39, cysteine 33/cysteine 56, cysteine 40/cysteine 46, cysteine 73/cysteine 85, cysteine 79/cysteine 97, and cysteine 86/cysteine 91.

It belongs to the vasopressin/oxytocin family. In terms of assembly, interacts with vasopressin receptors V1bR/AVPR1B (Ki=85 pM), V1aR/AVPR1A (Ki=0.6 nM) and V2R/AVPR2 (Ki=4.9 nM). Interacts with oxytocin receptor (OXTR) (Ki=110 nM).

Its subcellular location is the secreted. Functionally, neurophysin 2 specifically binds vasopressin. Vasopressin has a direct antidiuretic action on the kidney, it also causes vasoconstriction of the peripheral vessels. Acts by binding to vasopressin receptors (V1bR/AVPR1B, V1aR/AVPR1A, and V2R/AVPR2). This chain is Vasopressin-neurophysin 2 (AVP), found in Balaenoptera physalus (Fin whale).